The primary structure comprises 242 residues: Probable transcriptional regulatory protein NGK_1508 (242 aa).

This sequence belongs to the TACO1 family.

It localises to the cytoplasm. The chain is Probable transcriptional regulatory protein NGK_1508 from Neisseria gonorrhoeae (strain NCCP11945).